The primary structure comprises 272 residues: R3H domain-containing protein 4 (272 aa).

Positions 141–167 (LEDEGKSKARRRGPTRGEDRRREDPAY) are disordered. Over residues 155–165 (TRGEDRRREDP) the composition is skewed to basic and acidic residues. The R3H domain occupies 191–254 (METLETWEER…KRQMKVSNRH (64 aa)).

The protein resides in the nucleus. This chain is R3H domain-containing protein 4 (R3HDM4), found in Bos taurus (Bovine).